Consider the following 140-residue polypeptide: Arsenate reductase ArsI2 (140 aa).

The active-site Nucleophile; cysteine thioarsenate intermediate is the C10.

It belongs to the ArsC family.

The enzyme catalyses [glutaredoxin]-dithiol + arsenate + glutathione + H(+) = glutathionyl-S-S-[glutaredoxin] + arsenite + H2O. Catalyzes the reduction of arsenate [As(V)] to arsenite [As(III)]. Does not constitute the major arsenate reductase in cells: essential only in the absence of ArsC (AC P74313). In Synechocystis sp. (strain ATCC 27184 / PCC 6803 / Kazusa), this protein is Arsenate reductase ArsI2.